The following is a 322-amino-acid chain: Ferredoxin--NADP reductase (322 aa).

Residues S14, D33, Q41, Y46, A86, F120, D278, and S319 each coordinate FAD.

It belongs to the ferredoxin--NADP reductase type 2 family. As to quaternary structure, homodimer. It depends on FAD as a cofactor.

The enzyme catalyses 2 reduced [2Fe-2S]-[ferredoxin] + NADP(+) + H(+) = 2 oxidized [2Fe-2S]-[ferredoxin] + NADPH. This is Ferredoxin--NADP reductase from Salinispora arenicola (strain CNS-205).